We begin with the raw amino-acid sequence, 596 residues long: DNA mismatch repair protein MutL (596 aa).

This sequence belongs to the DNA mismatch repair MutL/HexB family.

In terms of biological role, this protein is involved in the repair of mismatches in DNA. It is required for dam-dependent methyl-directed DNA mismatch repair. May act as a 'molecular matchmaker', a protein that promotes the formation of a stable complex between two or more DNA-binding proteins in an ATP-dependent manner without itself being part of a final effector complex. The protein is DNA mismatch repair protein MutL of Leptospira borgpetersenii serovar Hardjo-bovis (strain L550).